Consider the following 264-residue polypeptide: Phosphonates import ATP-binding protein PhnC (264 aa).

In terms of domain architecture, ABC transporter spans 3 to 246 (IRLQEAGLRH…MLDALYANEQ (244 aa)). 35–42 (GPSGAGKS) contacts ATP.

It belongs to the ABC transporter superfamily. Phosphonates importer (TC 3.A.1.9.1) family. In terms of assembly, the complex is composed of two ATP-binding proteins (PhnC), two transmembrane proteins (PhnE) and a solute-binding protein (PhnD).

The protein resides in the cell inner membrane. The enzyme catalyses phosphonate(out) + ATP + H2O = phosphonate(in) + ADP + phosphate + H(+). Its function is as follows. Part of the ABC transporter complex PhnCDE involved in phosphonates import. Responsible for energy coupling to the transport system. The protein is Phosphonates import ATP-binding protein PhnC of Pseudomonas entomophila (strain L48).